Here is a 262-residue protein sequence, read N- to C-terminus: MFPRLPTLALGALLLASTPLLAAQPVTTLTVLSSGGIMGTIREVAPAYEKATGVKLDIAAAPSMGDTPQAIPNRLARNEPADVVLMVGSALDKLVASGQVAKDSRVDLGQSFIAMAVRQGAPKPDISNMDAFKQTLEKAQSVAYSDSASGVYLSRILFPRMQLDKSFMAKARMIPAEPVGAVVARGEAQLGFQQLSELKAVPGIDIVGLIPDQAQKMTLYSGAMVSKSQHPEAARALLQYLASKDAAKAIEDSGLKPVPAQP.

The signal sequence occupies residues 1 to 22; it reads MFPRLPTLALGALLLASTPLLA.

In terms of assembly, monomer.

It catalyses the reaction trans-aconitate = cis-aconitate. With respect to regulation, activated more than 1.5 fold by Ca(2+), Mg(2+), Mn(2+), Ni(2+), Fe(2+), DDT and 1,10-phenanthroline. Strongly inhibited by Ag(+) and Hg(+). Inhibited by addition of 20% (v/v) glycerol. No effect by addition of NADH or NADPH. In terms of biological role, involved in assimilation of trans-aconitic acid. Preference for cis-aconitic acid is 14-fold higher than for trans-aconitic acid. Not active on intermediates of tricarboxylic acid (TCA) cycle including citric acid, succinic acid, fumaric acid, and 2-oxoglutaric acid or on other dicarboxilic acids including itaconic acid, formic acid, citraconic acid or maleic acid. The protein is Aconitate isomerase of Pseudomonas sp.